Reading from the N-terminus, the 1241-residue chain is Interphotoreceptor matrix proteoglycan 2 (1241 aa).

Positions 1-22 (MIMFPLFGKISLGILIFVLIEG) are cleaved as a signal peptide. The Extracellular segment spans residues 23–1099 (DFPSLTAQTY…KHCEEFVSEP (1077 aa)). N-linked (GlcNAc...) asparagine glycosylation occurs at asparagine 154. The interval 180–223 (ELSSPVPVGDTSTLGDTTLSVPHPEVDAYEGASESSLERPEESI) is disordered. A compositionally biased stretch (polar residues) spans 189-199 (DTSTLGDTTLS). 2 O-linked (GalNAc...) threonine glycosylation sites follow: threonine 190 and threonine 192. The SEA 1 domain maps to 239–353 (GEQIAEFSIH…KPTVVYTISN (115 aa)). The tract at residues 259–267 (QDSSSFHHQ) is hyaluronan-binding motif involved in chondroitin sulfate A-binding. 3 N-linked (GlcNAc...) asparagine glycosylation sites follow: asparagine 301, asparagine 320, and asparagine 370. 2 O-linked (GalNAc...) threonine glycosylation sites follow: threonine 544 and threonine 556. A compositionally biased stretch (basic and acidic residues) spans 660–678 (QISKHSKYEHDDRSTHFPE). A disordered region spans residues 660–684 (QISKHSKYEHDDRSTHFPEEEPLSG). In terms of domain architecture, SEA 2 spans 897–1010 (GALVVFFSLR…YSLDVESGDE (114 aa)). N-linked (GlcNAc...) asparagine glycans are attached at residues asparagine 942 and asparagine 956. EGF-like domains follow at residues 1010-1051 (EANP…RPCQ) and 1052-1093 (SLCD…KHCE). Intrachain disulfides connect cysteine 1014/cysteine 1025, cysteine 1019/cysteine 1036, cysteine 1038/cysteine 1050, cysteine 1054/cysteine 1067, cysteine 1061/cysteine 1077, and cysteine 1079/cysteine 1092. The tract at residues 1080–1088 (RVGENWWYR) is hyaluronan-binding motif involved in chondroitin sulfate C-binding. Residues 1100–1120 (VIIGITIASVVGLLVIFSAII) traverse the membrane as a helical segment. The Cytoplasmic segment spans residues 1121–1241 (YFFIRTLQAH…FVREQQVEEV (121 aa)). Residues 1125 to 1133 (RTLQAHHDR) form a hyaluronan-binding motif involved in chondroitin sulfate A- and C-binding region. The interval 1136–1145 (RESPFSGSSR) is hyaluronan-binding motif involved in chondroitin sulfate C-binding. Residues 1210-1218 (REEIQERMR) form a hyaluronan-binding motif involved in chondroitin sulfate A- and C-binding motif region.

Post-translationally, highly glycosylated (N- and O-linked carbohydrates). In terms of tissue distribution, expressed in the retina (at protein level). Expressed by photoreceptors of the interphotoreceptor matrix (IPM) surrounding both rods and cones (at protein level). IPM occupies the subretinal space between the apices of the retinal pigment epithelium and the neural retina. Expressed in the pineal gland (at protein level).

It is found in the photoreceptor outer segment membrane. Its subcellular location is the photoreceptor inner segment membrane. The protein resides in the secreted. The protein localises to the extracellular space. It localises to the extracellular matrix. It is found in the interphotoreceptor matrix. Functionally, chondroitin sulfate- and hyaluronan-binding proteoglycan involved in the organization of interphotoreceptor matrix; may participate in the maturation and maintenance of the light-sensitive photoreceptor outer segment. Binds heparin. This chain is Interphotoreceptor matrix proteoglycan 2 (IMPG2), found in Homo sapiens (Human).